The chain runs to 41 residues: Large ribosomal subunit protein bL36 (41 aa).

The protein belongs to the bacterial ribosomal protein bL36 family.

This is Large ribosomal subunit protein bL36 from Methylocella silvestris (strain DSM 15510 / CIP 108128 / LMG 27833 / NCIMB 13906 / BL2).